Here is a 110-residue protein sequence, read N- to C-terminus: Iron-sulfur cluster assembly protein CyaY (110 aa).

The protein belongs to the frataxin family.

Functionally, involved in iron-sulfur (Fe-S) cluster assembly. May act as a regulator of Fe-S biogenesis. The protein is Iron-sulfur cluster assembly protein CyaY of Paracidovorax citrulli (strain AAC00-1) (Acidovorax citrulli).